The primary structure comprises 203 residues: Probable cytochrome c oxidase subunit 3 (203 aa).

5 helical membrane-spanning segments follow: residues 30-50, 71-91, 96-116, 143-163, and 179-199; these read IVWL…YFSA, VPVT…VFAA, IFGL…FVLG, ATGF…FLLV, and IVVS…FTVI.

This sequence belongs to the cytochrome c oxidase subunit 3 family.

It is found in the cell membrane. The catalysed reaction is 4 Fe(II)-[cytochrome c] + O2 + 8 H(+)(in) = 4 Fe(III)-[cytochrome c] + 2 H2O + 4 H(+)(out). The chain is Probable cytochrome c oxidase subunit 3 (ctaE) from Mycobacterium bovis (strain ATCC BAA-935 / AF2122/97).